The following is a 610-amino-acid chain: Zinc metalloproteinase-disintegrin-like 4a (610 aa).

A signal peptide spans 1-20; sequence MIQVLLVTISLAVFPYQGSS. Residues 21-189 constitute a propeptide that is removed on maturation; sequence VILESGNVND…KKASQSNLTP (169 aa). The Peptidase M12B domain maps to 199 to 395; that stretch reads KYVKLFLVAD…NMPQCILKKP (197 aa). An N-linked (GlcNAc...) asparagine glycan is attached at Asn-218. A Ca(2+)-binding site is contributed by Asp-286. Disulfide bonds link Cys-310-Cys-390, Cys-350-Cys-374, and Cys-352-Cys-357. Zn(2+) is bound at residue His-335. Residue Glu-336 is part of the active site. Residues His-339 and His-345 each contribute to the Zn(2+) site. Cys-390, Val-405, Asn-408, Phe-410, Glu-412, Glu-415, and Asp-418 together coordinate Ca(2+). The region spanning 403-488 is the Disintegrin domain; that stretch reads PAVCGNYFVE…AECTDSFQRN (86 aa). Intrachain disulfides connect Cys-406-Cys-435, Cys-417-Cys-430, Cys-419-Cys-425, Cys-429-Cys-452, Cys-443-Cys-449, Cys-448-Cys-474, Cys-461-Cys-481, Cys-468-Cys-499, Cys-492-Cys-504, Cys-511-Cys-561, Cys-526-Cys-572, Cys-539-Cys-549, Cys-556-Cys-598, and Cys-592-Cys-603. Positions 467–469 match the D/ECD-tripeptide motif; sequence ECD.

It belongs to the venom metalloproteinase (M12B) family. P-III subfamily. Zn(2+) is required as a cofactor. Expressed by the venom gland.

The protein resides in the secreted. Functionally, snake venom metalloproteinase that impairs hemostasis in the envenomed animal. This is Zinc metalloproteinase-disintegrin-like 4a from Crotalus adamanteus (Eastern diamondback rattlesnake).